The chain runs to 280 residues: 2-dehydro-3-deoxyphosphooctonate aldolase (280 aa).

It belongs to the KdsA family.

It localises to the cytoplasm. It catalyses the reaction D-arabinose 5-phosphate + phosphoenolpyruvate + H2O = 3-deoxy-alpha-D-manno-2-octulosonate-8-phosphate + phosphate. Its pathway is carbohydrate biosynthesis; 3-deoxy-D-manno-octulosonate biosynthesis; 3-deoxy-D-manno-octulosonate from D-ribulose 5-phosphate: step 2/3. The protein operates within bacterial outer membrane biogenesis; lipopolysaccharide biosynthesis. The chain is 2-dehydro-3-deoxyphosphooctonate aldolase from Thiobacillus denitrificans (strain ATCC 25259 / T1).